A 106-amino-acid polypeptide reads, in one-letter code: Transcription initiation factor IIA subunit 2 (106 aa).

This sequence belongs to the TFIIA subunit 2 family. As to quaternary structure, TFIIA is a heterodimer of the large unprocessed subunit 1 and a small subunit gamma. It was originally believed to be a heterotrimer of an alpha, a beta and a gamma subunit.

It localises to the nucleus. Its function is as follows. TFIIA is a component of the transcription machinery of RNA polymerase II and plays an important role in transcriptional activation. TFIIA in a complex with TBP mediates transcriptional activity. In Arabidopsis thaliana (Mouse-ear cress), this protein is Transcription initiation factor IIA subunit 2 (TFIIA-S).